The following is a 396-amino-acid chain: Elongation factor Tu 2 (396 aa).

A tr-type G domain is found at 10–206; that stretch reads KPHINVGTIG…VLDSYIPEPQ (197 aa). The segment at 19-26 is G1; the sequence is GHVDHGKT. Residue 19-26 participates in GTP binding; the sequence is GHVDHGKT. Thr-26 serves as a coordination point for Mg(2+). Residues 60-64 are G2; that stretch reads GITIN. The segment at 81 to 84 is G3; sequence DCPG. GTP-binding positions include 81 to 85 and 136 to 139; these read DCPGH and NKAD. The interval 136–139 is G4; sequence NKAD. The G5 stretch occupies residues 174–176; sequence SAL.

It belongs to the TRAFAC class translation factor GTPase superfamily. Classic translation factor GTPase family. EF-Tu/EF-1A subfamily. In terms of assembly, monomer.

It is found in the cytoplasm. The catalysed reaction is GTP + H2O = GDP + phosphate + H(+). In terms of biological role, GTP hydrolase that promotes the GTP-dependent binding of aminoacyl-tRNA to the A-site of ribosomes during protein biosynthesis. The chain is Elongation factor Tu 2 from Nitrosomonas eutropha (strain DSM 101675 / C91 / Nm57).